The chain runs to 126 residues: Ribosome-binding factor A (126 aa).

The protein belongs to the RbfA family. As to quaternary structure, monomer. Binds 30S ribosomal subunits, but not 50S ribosomal subunits or 70S ribosomes.

It localises to the cytoplasm. One of several proteins that assist in the late maturation steps of the functional core of the 30S ribosomal subunit. Associates with free 30S ribosomal subunits (but not with 30S subunits that are part of 70S ribosomes or polysomes). Required for efficient processing of 16S rRNA. May interact with the 5'-terminal helix region of 16S rRNA. In Thermosipho africanus (strain TCF52B), this protein is Ribosome-binding factor A.